Consider the following 160-residue polypeptide: Ureidoglycolate lyase (160 aa).

Belongs to the ureidoglycolate lyase family. As to quaternary structure, homodimer. The cofactor is Ni(2+).

The enzyme catalyses (S)-ureidoglycolate = urea + glyoxylate. The protein operates within nitrogen metabolism; (S)-allantoin degradation. Its function is as follows. Catalyzes the catabolism of the allantoin degradation intermediate (S)-ureidoglycolate, generating urea and glyoxylate. Involved in the utilization of allantoin as nitrogen source. This Salmonella gallinarum (strain 287/91 / NCTC 13346) protein is Ureidoglycolate lyase.